The sequence spans 235 residues: Glucosamine-6-phosphate deaminase (235 aa).

Asp-62 functions as the Proton acceptor; for enolization step in the catalytic mechanism. The active-site For ring-opening step is Asn-128. His-130 functions as the Proton acceptor; for ring-opening step in the catalytic mechanism. The For ring-opening step role is filled by Glu-135.

Belongs to the glucosamine/galactosamine-6-phosphate isomerase family. NagB subfamily.

It catalyses the reaction alpha-D-glucosamine 6-phosphate + H2O = beta-D-fructose 6-phosphate + NH4(+). The protein operates within amino-sugar metabolism; N-acetylneuraminate degradation; D-fructose 6-phosphate from N-acetylneuraminate: step 5/5. Its function is as follows. Catalyzes the reversible isomerization-deamination of glucosamine 6-phosphate (GlcN6P) to form fructose 6-phosphate (Fru6P) and ammonium ion. The polypeptide is Glucosamine-6-phosphate deaminase (Streptococcus pneumoniae (strain JJA)).